Reading from the N-terminus, the 533-residue chain is ATP synthase F(1) complex catalytic subunit beta, mitochondrial (533 aa).

The N-terminal 53 residues, Met-1–Ala-53, are a transit peptide targeting the mitochondrion. ADP is bound by residues Gly-214, Val-215, Gly-216, Lys-217, Thr-218, and Val-219. Gly-214 lines the ATP pocket. Gly-214, Val-215, Gly-216, Lys-217, and Thr-218 together coordinate phosphate. Residues Gly-216, Lys-217, Thr-218, and Val-219 each coordinate ATP. Thr-218 lines the Mg(2+) pocket. Glu-243 provides a ligand contact to Mg(2+). Arg-244 is a binding site for ATP.

Homotrimer. Component of the ATP synthase complex composed at least of ATP5F1A/subunit alpha, ATP5F1B/subunit beta, ATP5MC1/subunit c (homooctomer), MT-ATP6/subunit a, MT-ATP8/subunit 8, ATP5ME/subunit e, ATP5MF/subunit f, ATP5MG/subunit g, ATP5MK/subunit k, ATP5MJ/subunit j, ATP5F1C/subunit gamma, ATP5F1D/subunit delta, ATP5F1E/subunit epsilon, ATP5PF/subunit F6, ATP5PB/subunit b, ATP5PD/subunit d, ATP5PO/subunit OSCP. ATP synthase complex consists of a soluble F(1) head domain (subunits alpha(3) and beta(3)) - the catalytic core - and a membrane F(0) domain - the membrane proton channel (subunits c, a, 8, e, f, g, k and j). These two domains are linked by a central stalk (subunits gamma, delta, and epsilon) rotating inside the F1 region and a stationary peripheral stalk (subunits F6, b, d, and OSCP).

The protein localises to the mitochondrion inner membrane. The catalysed reaction is ATP + H2O + 4 H(+)(in) = ADP + phosphate + 5 H(+)(out). Functionally, catalytic subunit beta, of the mitochondrial membrane ATP synthase complex (F(1)F(0) ATP synthase or Complex V) that produces ATP from ADP in the presence of a proton gradient across the membrane which is generated by electron transport complexes of the respiratory chain. ATP synthase complex consist of a soluble F(1) head domain - the catalytic core - and a membrane F(1) domain - the membrane proton channel. These two domains are linked by a central stalk rotating inside the F(1) region and a stationary peripheral stalk. During catalysis, ATP synthesis in the catalytic domain of F(1) is coupled via a rotary mechanism of the central stalk subunits to proton translocation. In vivo, can only synthesize ATP although its ATP hydrolase activity can be activated artificially in vitro. With the subunit alpha (ATP5F1A), forms the catalytic core in the F(1) domain. The polypeptide is ATP synthase F(1) complex catalytic subunit beta, mitochondrial (Gallus gallus (Chicken)).